We begin with the raw amino-acid sequence, 504 residues long: Putative pentatricopeptide repeat-containing protein At3g28640 (504 aa).

PPR repeat units lie at residues 77 to 107, 115 to 149, 151 to 181, 182 to 216, 217 to 251, 253 to 287, 288 to 319, 320 to 350, and 356 to 390; these read NSFV…MVKE, SYLT…GVFL, DSHV…IPQP, DVVK…GLEP, DEFS…SWIE, DVFV…NVFS, WAAL…GIKP, DSVV…MEAR, and KHEH…PLAS. The tract at residues 391-470 is type E motif; the sequence is VWGALLNGCR…TPGWSVLEVD (80 aa). The segment at 471 to 501 is type E(+) motif; sequence GNVTKFVSGDVSHPNLLQIHTVIHLLSVDAL.

The protein belongs to the PPR family. PCMP-E subfamily.

The protein is Putative pentatricopeptide repeat-containing protein At3g28640 (PCMP-E79) of Arabidopsis thaliana (Mouse-ear cress).